The sequence spans 383 residues: Decapping nuclease RAI1 (383 aa).

Glutamate 166 provides a ligand contact to a divalent metal cation. Position 215 (glutamate 215) interacts with substrate. A divalent metal cation-binding residues include aspartate 217, glutamate 235, and leucine 236. Residues lysine 237 and glutamine 261 each contribute to the substrate site.

The protein belongs to the DXO/Dom3Z family. As to quaternary structure, interacts with RAT1; the interaction is direct, stabilizes RAT1 protein structure and stimulates its exoribonuclease activity. The interaction also stimulates RAI1 pyrophosphohydrolase activity, probably by recruiting it to mRNA substrates. It depends on a divalent metal cation as a cofactor.

It localises to the nucleus. The catalysed reaction is a 5'-end NAD(+)-phospho-ribonucleoside in mRNA + H2O = a 5'-end phospho-ribonucleoside in mRNA + NAD(+) + H(+). It catalyses the reaction a 5'-end (N(7)-methyl 5'-triphosphoguanosine)-ribonucleoside-ribonucleotide in mRNA + H2O = a (N(7)-methyl 5'-triphosphoguanosine)-nucleoside + a 5'-end phospho-ribonucleoside in mRNA + H(+). The enzyme catalyses a 5'-end triphospho-ribonucleoside in mRNA + H2O = a 5'-end phospho-ribonucleoside in mRNA + diphosphate + H(+). In terms of biological role, decapping enzyme for NAD-capped RNAs: specifically hydrolyzes the nicotinamide adenine dinucleotide (NAD) cap from a subset of RNAs by removing the entire NAD moiety from the 5'-end of an NAD-capped RNA. The NAD-cap is present at the 5'-end of some RNAs and snoRNAs. In contrast to the canonical 5'-end N7 methylguanosine (m7G) cap, the NAD cap promotes mRNA decay. Also acts as a non-canonical decapping enzyme that removes the entire cap structure of m7G capped or incompletely capped RNAs. Has decapping activity toward incomplete 5'-end m7G cap mRNAs such as unmethylated 5'-end-capped RNA (cap0), while it has no activity toward 2'-O-ribose methylated m7G cap (cap1). Also possesses RNA 5'-pyrophosphohydrolase activity by hydrolyzing the 5'-end triphosphate to release pyrophosphates. Stimulates exoribonuclease activity of Rat1, allowing it to degrade RNAs with stable secondary structure more effectively. The chain is Decapping nuclease RAI1 from Lachancea thermotolerans (strain ATCC 56472 / CBS 6340 / NRRL Y-8284) (Yeast).